The chain runs to 412 residues: Multifunctional CCA protein (412 aa).

Gly8 and Arg11 together coordinate ATP. Residues Gly8 and Arg11 each coordinate CTP. Residues Asp21 and Asp23 each contribute to the Mg(2+) site. 3 residues coordinate ATP: Arg91, Arg138, and Arg141. The CTP site is built by Arg91, Arg138, and Arg141. The region spanning 229–334 (RGQHTLLALQ…LELFNQLDVW (106 aa)) is the HD domain.

The protein belongs to the tRNA nucleotidyltransferase/poly(A) polymerase family. Bacterial CCA-adding enzyme type 1 subfamily. As to quaternary structure, monomer. Can also form homodimers and oligomers. The cofactor is Mg(2+). It depends on Ni(2+) as a cofactor.

The catalysed reaction is a tRNA precursor + 2 CTP + ATP = a tRNA with a 3' CCA end + 3 diphosphate. It carries out the reaction a tRNA with a 3' CCA end + 2 CTP + ATP = a tRNA with a 3' CCACCA end + 3 diphosphate. Its function is as follows. Catalyzes the addition and repair of the essential 3'-terminal CCA sequence in tRNAs without using a nucleic acid template. Adds these three nucleotides in the order of C, C, and A to the tRNA nucleotide-73, using CTP and ATP as substrates and producing inorganic pyrophosphate. tRNA 3'-terminal CCA addition is required both for tRNA processing and repair. Also involved in tRNA surveillance by mediating tandem CCA addition to generate a CCACCA at the 3' terminus of unstable tRNAs. While stable tRNAs receive only 3'-terminal CCA, unstable tRNAs are marked with CCACCA and rapidly degraded. The sequence is that of Multifunctional CCA protein from Haemophilus ducreyi (strain 35000HP / ATCC 700724).